The primary structure comprises 60 residues: Defensin MGD-1 (60 aa).

Intrachain disulfides connect C4–C25, C10–C33, C14–C35, and C21–C38. A 3-hydroxytryptophan modification is found at W28. A Cysteine amide modification is found at C38. Positions 39 to 60 are excised as a propeptide; sequence GGRREDVEDIFDIFDNEAADRF.

The protein belongs to the invertebrate defensin family. Type 2 subfamily. Post-translationally, the hydroxylation of the Trp-28 is not important for the antibacterial activity. In terms of tissue distribution, abundantly expressed in hemocytes.

It localises to the secreted. Functionally, active against both Gram-positive and Gram-negative bacteria but is not cytotoxic towards human erythrocytes or protozoa. This Mytilus galloprovincialis (Mediterranean mussel) protein is Defensin MGD-1 (FH3).